We begin with the raw amino-acid sequence, 223 residues long: Glutathione-specific gamma-glutamylcyclotransferase 1 (223 aa).

The interval 1-26 (MKQESASQSTPPPSLSPAPSSAQPSW) is disordered. Residue 36–41 (IFGYGS) participates in substrate binding. Glutamate 116 acts as the Proton acceptor in catalysis.

This sequence belongs to the gamma-glutamylcyclotransferase family. ChaC subfamily. As to quaternary structure, interacts with NOTCH1 (via extracellular region). In terms of tissue distribution, widely expressed, with high expression in forebrain and anterior spinal cord. Expressed at intermediate level in the dorsal aorta and heart. Present throughout adult brain (at protein level).

The protein resides in the cytoplasm. It is found in the cytosol. The protein localises to the golgi apparatus. It localises to the trans-Golgi network. It catalyses the reaction glutathione = L-cysteinylglycine + 5-oxo-L-proline. Its function is as follows. Catalyzes the cleavage of glutathione into 5-oxo-L-proline and a Cys-Gly dipeptide. Acts specifically on glutathione, but not on other gamma-glutamyl peptides. Glutathione depletion is an important factor for apoptosis initiation and execution. Acts as a pro-apoptotic component of the unfolded protein response pathway by mediating the pro-apoptotic effects of the ATF4-ATF3-DDIT3/CHOP cascade. Negative regulator of Notch signaling pathway involved in embryonic neurogenesis: acts by inhibiting Notch cleavage by furin, maintaining Notch in an immature inactive form, thereby promoting neurogenesis in embryos. This Mus musculus (Mouse) protein is Glutathione-specific gamma-glutamylcyclotransferase 1.